The following is a 155-amino-acid chain: Transmembrane protein C1orf162 (155 aa).

Positions 1–28 are disordered; that stretch reads MGGNGSTCKPDTERQGTLSTAAPTTSPA. Residues 19–28 are compositionally biased toward low complexity; that stretch reads STAAPTTSPA. A helical transmembrane segment spans residues 41-61; sequence ILAFCAGVLLTLLLIAFIFLI. The disordered stretch occupies residues 92–114; that stretch reads ADHSKPQAPDPHSDPPAKLSSIP. S140 bears the Phosphoserine mark.

The protein resides in the membrane. This chain is Transmembrane protein C1orf162 (C1orf162), found in Homo sapiens (Human).